Reading from the N-terminus, the 389-residue chain is Succinate--CoA ligase [ADP-forming] subunit beta (389 aa).

The 236-residue stretch at K9–H244 folds into the ATP-grasp domain. Residues K46, G53–G55, E99, T102, and E107 contribute to the ATP site. Mg(2+)-binding residues include N199 and D213. Substrate is bound by residues N264 and G321–V323.

Belongs to the succinate/malate CoA ligase beta subunit family. As to quaternary structure, heterotetramer of two alpha and two beta subunits. Mg(2+) is required as a cofactor.

It catalyses the reaction succinate + ATP + CoA = succinyl-CoA + ADP + phosphate. The catalysed reaction is GTP + succinate + CoA = succinyl-CoA + GDP + phosphate. The protein operates within carbohydrate metabolism; tricarboxylic acid cycle; succinate from succinyl-CoA (ligase route): step 1/1. Its function is as follows. Succinyl-CoA synthetase functions in the citric acid cycle (TCA), coupling the hydrolysis of succinyl-CoA to the synthesis of either ATP or GTP and thus represents the only step of substrate-level phosphorylation in the TCA. The beta subunit provides nucleotide specificity of the enzyme and binds the substrate succinate, while the binding sites for coenzyme A and phosphate are found in the alpha subunit. The chain is Succinate--CoA ligase [ADP-forming] subunit beta from Teredinibacter turnerae (strain ATCC 39867 / T7901).